Here is a 354-residue protein sequence, read N- to C-terminus: 5,10-methenyltetrahydromethanopterin hydrogenase (354 aa).

Belongs to the HMD family.

It carries out the reaction 5,10-methenyl-5,6,7,8-tetrahydromethanopterin + H2 = 5,10-methylenetetrahydromethanopterin + H(+). The protein operates within one-carbon metabolism; methanogenesis from CO(2); 5,10-methylene-5,6,7,8-tetrahydromethanopterin from 5,10-methenyl-5,6,7,8-tetrahydromethanopterin (hydrogen route): step 1/1. Catalyzes the reversible reduction of methenyl-H(4)MPT(+) to methylene-H(4)MPT. This chain is 5,10-methenyltetrahydromethanopterin hydrogenase, found in Methanococcus maripaludis (strain C7 / ATCC BAA-1331).